The following is a 449-amino-acid chain: Flavonol 7-O-beta-glucosyltransferase UGT74F1 (449 aa).

The active-site Proton acceptor is His18. An anthocyanidin is bound at residue His18. Asp111 acts as the Charge relay in catalysis. The UDP-alpha-D-glucose site is built by Thr133, Gln327, His342, Trp345, Asn346, Ser347, Glu350, Asp366, and Gln367.

Belongs to the UDP-glycosyltransferase family.

It catalyses the reaction a 7-O-hydroxy-flavonol + UDP-alpha-D-glucose = a flavonol 7-O-beta-D-glucoside + UDP + H(+). Its function is as follows. Possesses quercetin 7-O-glucosyltransferase and 4'-O-glucosyltransferase activities in vitro. Also active in vitro on benzoates and benzoate derivatives. Has low affinity for the tryptophan precursor anthranilate. Catalyzes the formation of anthranilate glucose ester. Is a minor source of this activity in the plant. In Arabidopsis thaliana (Mouse-ear cress), this protein is Flavonol 7-O-beta-glucosyltransferase UGT74F1.